The primary structure comprises 1292 residues: HMG domain-containing protein 3 (1292 aa).

Residues threonine 42 to alanine 110 constitute a DNA-binding region (HMG box). Disordered stretches follow at residues serine 363 to leucine 391, valine 448 to arginine 505, and lysine 562 to serine 588. Residues arginine 370–leucine 391 show a composition bias toward polar residues. A compositionally biased stretch (low complexity) spans proline 467–proline 478. Residues lysine 562–serine 572 show a composition bias toward polar residues.

The protein localises to the nucleus. This Homo sapiens (Human) protein is HMG domain-containing protein 3.